The following is a 1011-amino-acid chain: Retinoblastoma-related protein (1011 aa).

Positions 1–22 (MSQASVDMEDVKPSISLPSDDG) are disordered. Residues 411–612 (TPVSTAMTTA…ERGSSMYNSL (202 aa)) form a domain A region. The segment at 411-860 (TPVSTAMTTA…NEVFIPSVKP (450 aa)) is pocket. The segment at 613-729 (IVARPTLAAE…PAGGGETCAE (117 aa)) is spacer. Residues 730 to 860 (TGINIFFNKI…NEVFIPSVKP (131 aa)) are domain B. The segment at 872 to 903 (QKSKSSPEDSNNADSQIPGSPRLSPFPNLPDM) is disordered. The segment covering 873–889 (KSKSSPEDSNNADSQIP) has biased composition (polar residues).

Belongs to the retinoblastoma protein (RB) family.

The protein resides in the nucleus. Its function is as follows. Regulator of biological processes that recruits a histone deacetylase to control gene transcription. May play a role in the entry into mitosis, negatively regulating the cell proliferation. Formation of stable complexes with geminiviridae replication-associated proteins may create a cellular environment which favors viral DNA replication. This Cocos nucifera (Coconut palm) protein is Retinoblastoma-related protein (Rb1).